The following is a 455-amino-acid chain: Gametocyte surface protein P45/48 (455 aa).

Residues methionine 1–glycine 30 form the signal peptide. The 6-Cys 1 domain occupies leucine 48–tyrosine 186. 2 disulfides stabilise this stretch: cysteine 52–cysteine 74 and cysteine 106–cysteine 160. N-linked (GlcNAc...) asparagine glycans are attached at residues asparagine 135, asparagine 194, asparagine 275, and asparagine 307. The region spanning valine 302–glycine 433 is the 6-Cys 2 domain. Intrachain disulfides connect cysteine 306/cysteine 334, cysteine 351/cysteine 419, and cysteine 359/cysteine 417. Glycine 433 carries GPI-anchor amidated glycine lipidation. The propeptide at serine 434 to leucine 455 is removed in mature form.

As to quaternary structure, heterodimer; heterodimerizes with PF230.

It is found in the cell surface. The protein resides in the cell membrane. In terms of biological role, gametocyte surface protein required for male fertility. In Plasmodium berghei (strain Anka), this protein is Gametocyte surface protein P45/48 (PB45/48).